The following is a 218-amino-acid chain: uncharacterized protein (218 aa).

The CN hydrolase domain occupies Trp-4–Ser-207.

This is an uncharacterized protein from Escherichia coli (strain K12).